Here is a 577-residue protein sequence, read N- to C-terminus: Sensor protein ChvG (577 aa).

The Cytoplasmic segment spans residues methionine 1–arginine 29. Residues isoleucine 30–glutamine 50 traverse the membrane as a helical segment. Residues phenylalanine 51–arginine 260 are Periplasmic-facing. Residues leucine 261–leucine 281 form a helical membrane-spanning segment. The Cytoplasmic portion of the chain corresponds to serine 282–proline 577. Residues serine 283–alanine 339 form the HAMP domain. A Histidine kinase domain is found at aspartate 347–proline 575. At histidine 350 the chain carries Phosphohistidine.

Homodimer.

The protein resides in the cell inner membrane. It carries out the reaction ATP + protein L-histidine = ADP + protein N-phospho-L-histidine.. Its pathway is glycan metabolism; exopolysaccharide biosynthesis. Member of a two-component regulatory system ChvG(ExoS)/ChvI involved in regulating the production of succinoglycan. Activates ChvI by phosphorylation. The sequence is that of Sensor protein ChvG (chvG) from Rhizobium meliloti (strain 1021) (Ensifer meliloti).